Reading from the N-terminus, the 647-residue chain is Threonine--tRNA ligase (647 aa).

The region spanning M1–T61 is the TGS domain. The catalytic stretch occupies residues D242–P540. Residues C336, H387, and H517 each coordinate Zn(2+).

This sequence belongs to the class-II aminoacyl-tRNA synthetase family. Homodimer. Zn(2+) is required as a cofactor.

It is found in the cytoplasm. It catalyses the reaction tRNA(Thr) + L-threonine + ATP = L-threonyl-tRNA(Thr) + AMP + diphosphate + H(+). Catalyzes the attachment of threonine to tRNA(Thr) in a two-step reaction: L-threonine is first activated by ATP to form Thr-AMP and then transferred to the acceptor end of tRNA(Thr). Also edits incorrectly charged L-seryl-tRNA(Thr). In Streptococcus pneumoniae (strain P1031), this protein is Threonine--tRNA ligase.